The primary structure comprises 963 residues: Reversion-inducing cysteine-rich protein with Kazal motifs (963 aa).

The signal sequence occupies residues 1–28 (MAAAVAAWPWALFCLAAVPPLLSPGAAG). The Knot 1 repeat unit spans residues 31–78 (CCYHAKDNLMCRDVCEQILSSKSDSRLKHLLQRAPEYCPESMGEVWGC). The segment at 31 to 332 (CCYHAKDNLM…NAVEVSMLTC (302 aa)) is 5 X Knot repeats. Asparagine 80 is a glycosylation site (N-linked (GlcNAc...) asparagine). Knot repeat units follow at residues 98-135 (CCEL…LFSC) and 145-191 (CCSY…LIHC). An N-linked (GlcNAc...) asparagine glycan is attached at asparagine 194. Knot repeat units lie at residues 210-257 (CCDR…LWQC) and 286-332 (CCSK…MLTC). N-linked (GlcNAc...) asparagine glycans are attached at residues asparagine 291 and asparagine 346. 3 Kazal-like domains span residues 621–667 (KFTG…SCIS), 692–746 (SFGK…PCQP), and 749–783 (KSVE…HCQA). Intrachain disulfides connect cysteine 627–cysteine 652, cysteine 629–cysteine 648, cysteine 637–cysteine 665, cysteine 710–cysteine 729, cysteine 718–cysteine 744, and cysteine 755–cysteine 781. Serine 936 is lipidated: GPI-anchor amidated serine. A propeptide spanning residues 937 to 963 (PSVKVGPVLHCLFISFSFTLLKLMDYI) is cleaved from the precursor.

The protein belongs to the RECK family. Interacts (via knot repeats) with WNT7A (via disordered linker region); the interaction is direct. Interacts (via knot repeats) with WNT7B (via disordered linker region); the interaction is direct. Interacts with ADGRA2; the interaction is direct. Localizes to the plasma membrane via its GPI-anchor. Released from the plasma membrane following cleavage of the GPI-anchor by GDPD5/GPE2.

It is found in the cell membrane. In terms of biological role, functions together with ADGRA2 to enable brain endothelial cells to selectively respond to Wnt7 signals (WNT7A or WNT7B). Plays a key role in Wnt7-specific responses: required for central nervous system (CNS) angiogenesis and blood-brain barrier regulation. Acts as a Wnt7-specific coactivator of canonical Wnt signaling by decoding Wnt ligands: acts by interacting specifically with the disordered linker region of Wnt7, thereby conferring ligand selectivity for Wnt7. ADGRA2 is then required to deliver RECK-bound Wnt7 to frizzled by assembling a higher-order RECK-ADGRA2-Fzd-LRP5-LRP6 complex. Also acts as a serine protease inhibitor. The chain is Reversion-inducing cysteine-rich protein with Kazal motifs from Gallus gallus (Chicken).